The sequence spans 390 residues: Putative transposase YncI (390 aa).

Belongs to the transposase 11 family.

This Escherichia coli O157:H7 protein is Putative transposase YncI (yncI).